Here is a 274-residue protein sequence, read N- to C-terminus: Diaminopimelate epimerase (274 aa).

Residues N11, Q44, and N64 each coordinate substrate. C73 (proton donor) is an active-site residue. Residues 74-75, N157, N190, and 208-209 contribute to the substrate site; these read GN and ER. C217 serves as the catalytic Proton acceptor. 218-219 lines the substrate pocket; it reads GS.

It belongs to the diaminopimelate epimerase family. Homodimer.

Its subcellular location is the cytoplasm. The catalysed reaction is (2S,6S)-2,6-diaminopimelate = meso-2,6-diaminopimelate. It participates in amino-acid biosynthesis; L-lysine biosynthesis via DAP pathway; DL-2,6-diaminopimelate from LL-2,6-diaminopimelate: step 1/1. Catalyzes the stereoinversion of LL-2,6-diaminopimelate (L,L-DAP) to meso-diaminopimelate (meso-DAP), a precursor of L-lysine and an essential component of the bacterial peptidoglycan. This is Diaminopimelate epimerase from Haemophilus ducreyi (strain 35000HP / ATCC 700724).